An 83-amino-acid chain; its full sequence is Short neurotoxin OKI-Ed (83 aa).

A signal peptide spans 1-21; it reads MKTLLLTLVVVTIVCLDLGYT. 4 disulfides stabilise this stretch: Cys-24–Cys-45, Cys-38–Cys-62, Cys-64–Cys-75, and Cys-76–Cys-81.

This sequence belongs to the three-finger toxin family. Short-chain subfamily. Type I alpha-neurotoxin sub-subfamily. As to expression, expressed by the venom gland.

It is found in the secreted. In terms of biological role, binds to muscle nicotinic acetylcholine receptor (nAChR) and inhibit acetylcholine from binding to the receptor, thereby impairing neuromuscular transmission. This chain is Short neurotoxin OKI-Ed, found in Laticauda semifasciata (Black-banded sea krait).